Here is a 74-residue protein sequence, read N- to C-terminus: Small ribosomal subunit protein uS8c (74 aa).

This sequence belongs to the universal ribosomal protein uS8 family. As to quaternary structure, part of the 30S ribosomal subunit.

Its subcellular location is the plastid. The protein localises to the chloroplast. In terms of biological role, one of the primary rRNA binding proteins, it binds directly to 16S rRNA central domain where it helps coordinate assembly of the platform of the 30S subunit. The chain is Small ribosomal subunit protein uS8c (rps8) from Oenothera ammophila (Evening primerose).